Reading from the N-terminus, the 189-residue chain is MQVQCNEKAFKGGFIINSQIATAPPKTLDTTITIGKPTVEDGAAMWELVNKSTLDTNSPYKYIMMCEYFAETCVVAKENERLVGFVTAFIPPEHQDVIFVWQIGVDSSQRGKGLASKLLQELISRDICSNVNYVEATVTPSNKASQALFQKLAREYNTQCEVSECFSEDLFPGDDHEAELTFRIGPLHP.

Positions 32–183 (ITIGKPTVED…DDHEAELTFR (152 aa)) constitute an N-acetyltransferase domain.

Belongs to the acetyltransferase family. EctA subfamily.

It catalyses the reaction L-2,4-diaminobutanoate + acetyl-CoA = (2S)-4-acetamido-2-aminobutanoate + CoA + H(+). It functions in the pathway amine and polyamine biosynthesis; ectoine biosynthesis; L-ectoine from L-aspartate 4-semialdehyde: step 2/3. Catalyzes the acetylation of L-2,4-diaminobutyrate (DABA) to gamma-N-acetyl-alpha,gamma-diaminobutyric acid (ADABA) with acetyl coenzyme A. This Halalkalibacterium halodurans (strain ATCC BAA-125 / DSM 18197 / FERM 7344 / JCM 9153 / C-125) (Bacillus halodurans) protein is L-2,4-diaminobutyric acid acetyltransferase (ectA).